Consider the following 91-residue polypeptide: CRISPR-associated endoribonuclease Cas2 2 (91 aa).

D6 contacts Mg(2+).

The protein belongs to the CRISPR-associated endoribonuclease Cas2 protein family. In terms of assembly, homodimer, forms a heterotetramer with a Cas1 homodimer. It depends on Mg(2+) as a cofactor.

CRISPR (clustered regularly interspaced short palindromic repeat), is an adaptive immune system that provides protection against mobile genetic elements (viruses, transposable elements and conjugative plasmids). CRISPR clusters contain sequences complementary to antecedent mobile elements and target invading nucleic acids. CRISPR clusters are transcribed and processed into CRISPR RNA (crRNA). Functions as a ssRNA-specific endoribonuclease. Involved in the integration of spacer DNA into the CRISPR cassette. The sequence is that of CRISPR-associated endoribonuclease Cas2 2 from Moorella thermoacetica (strain ATCC 39073 / JCM 9320).